Here is a 1331-residue protein sequence, read N- to C-terminus: ABC multidrug transporter MDR2 (1331 aa).

The segment at 1 to 50 (MVEPSEKPNTQNDDVSKQEIRNPVSSSSSTSDKEKVAKKGNSDATKSLTP) is disordered. Positions 31 to 41 (SDKEKVAKKGN) are enriched in basic and acidic residues. 4 helical membrane passes run 93–113 (MILLAIVSLASIAAGAALPLF), 147–167 (YFVYLGIAQFILLYVSTVGFI), 219–239 (KVGLTLTALSTFFSAFIIGYV), and 242–262 (WKLALICTSTIVAMVLVMGGI). The ABC transmembrane type-1 1 domain occupies 97 to 387 (AIVSLASIAA…VAPNTQAFAS (291 aa)). Asn-293 carries N-linked (GlcNAc...) asparagine glycosylation. A run of 2 helical transmembrane segments spans residues 325 to 345 (LGIMFGSMMAIMYSNYGLGFW) and 358 to 378 (LSAIVNILLAIVIGSFSIGNV). In terms of domain architecture, ABC transporter 1 spans 422–667 (IEFRGIKHIY…KGTYLQLVEA (246 aa)). Position 457–464 (457–464 (GPSGSGKS)) interacts with ATP. Asn-529 is a glycosylation site (N-linked (GlcNAc...) asparagine). 2 consecutive transmembrane segments (helical) span residues 762-782 (LCGFFFAVLSGAGQPVQSVFF) and 808-828 (LMFLMLGLVQLITQSAQGVIF). Residues 764–1051 (GFFFAVLSGA…VFSFSPDMGK (288 aa)) enclose the ABC transmembrane type-1 2 domain. The N-linked (GlcNAc...) asparagine glycan is linked to Asn-860. 4 helical membrane-spanning segments follow: residues 884-904 (LGTILMVSTTLIVALTVALAF), 910-930 (LVCISTVPVLLLCGFYRFWIL), 995-1015 (ASQSFSFFCLALGFWYGGGLL), and 1025-1045 (FFLCISCVIFGSQSAGIVFSF). The ABC transporter 2 domain maps to 1086–1324 (IEFRDVHFRY…KGRYYELVHM (239 aa)). Asn-1108 is a glycosylation site (N-linked (GlcNAc...) asparagine). 1121–1128 (GPSGCGKS) provides a ligand contact to ATP.

The protein belongs to the ABC transporter superfamily. ABCB family. Multidrug resistance exporter (TC 3.A.1.201) subfamily.

The protein resides in the cell membrane. It catalyses the reaction itraconazole(in) + ATP + H2O = itraconazole(out) + ADP + phosphate + H(+). In terms of biological role, ABC-type efflux transporter involved in the modulation susceptibility to itraconazole. The sequence is that of ABC multidrug transporter MDR2 from Trichophyton rubrum (strain ATCC MYA-4607 / CBS 118892) (Athlete's foot fungus).